Reading from the N-terminus, the 558-residue chain is Oligo-1,6-glucosidase (558 aa).

Aspartate 21, asparagine 23, aspartate 25, and aspartate 29 together coordinate Ca(2+). The active-site Nucleophile is the aspartate 199. Glutamate 255 acts as the Proton donor in catalysis.

It belongs to the glycosyl hydrolase 13 family.

The protein resides in the cytoplasm. It carries out the reaction Hydrolysis of (1-&gt;6)-alpha-D-glucosidic linkages in some oligosaccharides produced from starch and glycogen by alpha-amylase, and in isomaltose.. This chain is Oligo-1,6-glucosidase (malL), found in Bacillus cereus.